A 241-amino-acid polypeptide reads, in one-letter code: Pyridoxal phosphate phosphatase PHOSPHO2 (241 aa).

D8 serves as the catalytic Nucleophile. Mg(2+) is bound by residues D8 and D10. D10 functions as the Proton donor in the catalytic mechanism. Positions 19 and 99 each coordinate substrate. D179 lines the Mg(2+) pocket.

It belongs to the HAD-like hydrolase superfamily. PHOSPHO family. The cofactor is Mg(2+).

It carries out the reaction pyridoxal 5'-phosphate + H2O = pyridoxal + phosphate. In terms of biological role, phosphatase that has high activity toward pyridoxal 5'-phosphate (PLP). Also active at much lower level toward pyrophosphate, phosphoethanolamine (PEA), phosphocholine (PCho), phospho-l-tyrosine, fructose-6-phosphate, p-nitrophenyl phosphate, and h-glycerophosphate. The polypeptide is Pyridoxal phosphate phosphatase PHOSPHO2 (PHOSPHO2) (Bos taurus (Bovine)).